Here is a 188-residue protein sequence, read N- to C-terminus: Calcium load-activated calcium channel (188 aa).

Topologically, residues 1–4 (MSTM) are lumenal. A helical membrane pass occupies residues 5–32 (FADTILIVFISICTALLAEGITWVLVYR). The stretch at 32 to 89 (RTDKYKRLKAEVEKQSKKLEKKKETITESAGRQQKKKIERQEEKLKNNNRDLSMVRMK) forms a coiled coil. Residues 33–86 (TDKYKRLKAEVEKQSKKLEKKKETITESAGRQQKKKIERQEEKLKNNNRDLSMV) lie on the Cytoplasmic side of the membrane. The chain crosses the membrane as a helical span at residues 87–106 (RMKSMFAIGFCFTALMGMFN). The Lumenal segment spans residues 107-120 (SIFDGRVVAKLPFV). Residues 121 to 130 (PLSYIQGLSH) lie within the membrane without spanning it. The Lumenal portion of the chain corresponds to 131–140 (RNLLGEDYTD). The helical transmembrane segment at 141–162 (CSFIFLYILCTMSIRQNIQKML) threads the bilayer. Residues 163–188 (GLAPSRAATKQAGGFLGPPPQAAKFS) are Cytoplasmic-facing.

This sequence belongs to the TMCO1 family. Homodimer and homotetramer. Component of the multi-pass translocon (MPT) complex.

It is found in the endoplasmic reticulum membrane. It localises to the golgi apparatus membrane. In terms of biological role, calcium-selective channel required to prevent calcium stores from overfilling, thereby playing a key role in calcium homeostasis. In response to endoplasmic reticulum (ER) overloading, assembles into a homotetramer, forming a functional calcium-selective channel, regulating the calcium content in endoplasmic reticulum store. Component of the multi-pass translocon (MPT) complex that mediates insertion of multi-pass membrane proteins into the lipid bilayer of membranes. This chain is Calcium load-activated calcium channel, found in Danio rerio (Zebrafish).